The following is a 148-amino-acid chain: Nucleoside diphosphate kinase (148 aa).

Positions 9, 57, 85, 91, 102, and 112 each coordinate ATP. T91 is modified (phosphothreonine). The active-site Pros-phosphohistidine intermediate is H115. S122 bears the Phosphoserine mark.

Belongs to the NDK family. As to quaternary structure, homotetramer. Mg(2+) serves as cofactor.

The protein localises to the cytoplasm. The catalysed reaction is a 2'-deoxyribonucleoside 5'-diphosphate + ATP = a 2'-deoxyribonucleoside 5'-triphosphate + ADP. It carries out the reaction a ribonucleoside 5'-diphosphate + ATP = a ribonucleoside 5'-triphosphate + ADP. Functionally, major role in the synthesis of nucleoside triphosphates other than ATP. The ATP gamma phosphate is transferred to the NDP beta phosphate via a ping-pong mechanism, using a phosphorylated active-site intermediate. This chain is Nucleoside diphosphate kinase, found in Oceanobacillus iheyensis (strain DSM 14371 / CIP 107618 / JCM 11309 / KCTC 3954 / HTE831).